The primary structure comprises 968 residues: RNA polymerase-associated protein RapA (968 aa).

The region spanning 163–332 (EVGRRYAPRV…FARLRLLDPD (170 aa)) is the Helicase ATP-binding domain. 176–183 (DEVGLGKT) serves as a coordination point for ATP. Residues 278–281 (DEAH) carry the DEAH box motif. The 165-residue stretch at 491–655 (RVDWLIEFLK…EFAEDLLNVL (165 aa)) folds into the Helicase C-terminal domain.

The protein belongs to the SNF2/RAD54 helicase family. RapA subfamily. Interacts with the RNAP. Has a higher affinity for the core RNAP than for the holoenzyme. Its ATPase activity is stimulated by binding to RNAP.

In terms of biological role, transcription regulator that activates transcription by stimulating RNA polymerase (RNAP) recycling in case of stress conditions such as supercoiled DNA or high salt concentrations. Probably acts by releasing the RNAP, when it is trapped or immobilized on tightly supercoiled DNA. Does not activate transcription on linear DNA. Probably not involved in DNA repair. The chain is RNA polymerase-associated protein RapA from Shewanella baltica (strain OS155 / ATCC BAA-1091).